We begin with the raw amino-acid sequence, 548 residues long: ATPase expression protein 2, mitochondrial (548 aa).

The N-terminal 27 residues, 1–27, are a transit peptide targeting the mitochondrion; that stretch reads MRKQVIGINNIFHLARIRSIPVHCHCK.

Belongs to the AEP2 family. Binds to the 5'UTR of the OLI1 mRNA.

Its subcellular location is the mitochondrion. Functionally, required for translation of the mitochondrial OLI1 transcript coding for the mitochondrial ATP synthase subunit 9. In Candida glabrata (strain ATCC 2001 / BCRC 20586 / JCM 3761 / NBRC 0622 / NRRL Y-65 / CBS 138) (Yeast), this protein is ATPase expression protein 2, mitochondrial (AEP2).